We begin with the raw amino-acid sequence, 1385 residues long: DNA-directed RNA polymerase subunit beta (1385 aa).

Belongs to the RNA polymerase beta chain family. As to quaternary structure, the RNAP catalytic core consists of 2 alpha, 1 beta, 1 beta' and 1 omega subunit. When a sigma factor is associated with the core the holoenzyme is formed, which can initiate transcription.

It catalyses the reaction RNA(n) + a ribonucleoside 5'-triphosphate = RNA(n+1) + diphosphate. DNA-dependent RNA polymerase catalyzes the transcription of DNA into RNA using the four ribonucleoside triphosphates as substrates. The sequence is that of DNA-directed RNA polymerase subunit beta from Sulfurovum sp. (strain NBC37-1).